The sequence spans 596 residues: Tripeptidyl-peptidase SED2 (596 aa).

Residues 1–16 form the signal peptide; that stretch reads MLVLKFVCLLASVAAA. Positions 18-203 are cleaved as a propeptide — removed in mature form; it reads PTSWSSHKVV…LEAMSEEEFS (186 aa). Residues 210 to 596 enclose the Peptidase S53 domain; it reads LVTTACLREL…NFQALTKVLP (387 aa). The N-linked (GlcNAc...) asparagine glycan is linked to Asn-265. Active-site charge relay system residues include Glu-286 and Asp-290. N-linked (GlcNAc...) asparagine glycosylation is present at Asn-403. The active-site Charge relay system is Ser-501. Residues Asp-543 and Ile-544 each coordinate Ca(2+). Asn-572 carries N-linked (GlcNAc...) asparagine glycosylation. Residues Gly-576 and Asp-578 each coordinate Ca(2+).

The cofactor is Ca(2+).

It localises to the secreted. The protein localises to the extracellular space. It catalyses the reaction Release of an N-terminal tripeptide from a polypeptide.. In terms of biological role, secreted tripeptidyl-peptidase which degrades proteins at acidic pHs and is involved in virulence. In Arthroderma otae (strain ATCC MYA-4605 / CBS 113480) (Microsporum canis), this protein is Tripeptidyl-peptidase SED2 (SED2).